The chain runs to 250 residues: 3-deoxy-manno-octulosonate cytidylyltransferase 1 (250 aa).

The protein belongs to the KdsB family.

It is found in the cytoplasm. It catalyses the reaction 3-deoxy-alpha-D-manno-oct-2-ulosonate + CTP = CMP-3-deoxy-beta-D-manno-octulosonate + diphosphate. It functions in the pathway nucleotide-sugar biosynthesis; CMP-3-deoxy-D-manno-octulosonate biosynthesis; CMP-3-deoxy-D-manno-octulosonate from 3-deoxy-D-manno-octulosonate and CTP: step 1/1. The protein operates within bacterial outer membrane biogenesis; lipopolysaccharide biosynthesis. In terms of biological role, activates KDO (a required 8-carbon sugar) for incorporation into bacterial lipopolysaccharide in Gram-negative bacteria. The sequence is that of 3-deoxy-manno-octulosonate cytidylyltransferase 1 from Actinobacillus pleuropneumoniae serotype 5b (strain L20).